Consider the following 502-residue polypeptide: Lysine--tRNA ligase (502 aa).

Residues E409 and E416 each coordinate Mg(2+).

The protein belongs to the class-II aminoacyl-tRNA synthetase family. Homodimer. Requires Mg(2+) as cofactor.

The protein localises to the cytoplasm. The catalysed reaction is tRNA(Lys) + L-lysine + ATP = L-lysyl-tRNA(Lys) + AMP + diphosphate. The chain is Lysine--tRNA ligase from Shouchella clausii (strain KSM-K16) (Alkalihalobacillus clausii).